The chain runs to 185 residues: Ribosome-recycling factor (185 aa).

The protein belongs to the RRF family.

It localises to the cytoplasm. Responsible for the release of ribosomes from messenger RNA at the termination of protein biosynthesis. May increase the efficiency of translation by recycling ribosomes from one round of translation to another. The sequence is that of Ribosome-recycling factor from Baumannia cicadellinicola subsp. Homalodisca coagulata.